Here is a 511-residue protein sequence, read N- to C-terminus: Phosphoenolpyruvate carboxylase (511 aa).

It belongs to the PEPCase type 2 family. As to quaternary structure, homotetramer. It depends on Mg(2+) as a cofactor.

The catalysed reaction is oxaloacetate + phosphate = phosphoenolpyruvate + hydrogencarbonate. Functionally, catalyzes the irreversible beta-carboxylation of phosphoenolpyruvate (PEP) to form oxaloacetate (OAA), a four-carbon dicarboxylic acid source for the tricarboxylic acid cycle. This Saccharolobus islandicus (strain Y.G.57.14 / Yellowstone #1) (Sulfolobus islandicus) protein is Phosphoenolpyruvate carboxylase.